Here is a 337-residue protein sequence, read N- to C-terminus: Cysteine synthase 3 (337 aa).

Lys-47 bears the N6-(pyridoxal phosphate)lysine mark. Pyridoxal 5'-phosphate is bound by residues Asn-78, Gly-182 to Thr-186, and Ser-270.

This sequence belongs to the cysteine synthase/cystathionine beta-synthase family. As to quaternary structure, homodimer. The cofactor is pyridoxal 5'-phosphate.

It catalyses the reaction O-acetyl-L-serine + hydrogen sulfide = L-cysteine + acetate. It participates in amino-acid biosynthesis; L-cysteine biosynthesis; L-cysteine from L-serine: step 2/2. Functionally, primarily catalyzes the formation of cysteine and acetate from O-acetylserine and hydrogen sulfide. Can also catalyze the formation of cysteine and acetate from S-sulfocysteine and hydrogen sulfide and the formation of cyanoalanine and hydrogen sulfide from either S-sulfocysteine or O-acetylserine and hydrogen cyanide. This is Cysteine synthase 3 from Caenorhabditis elegans.